Consider the following 421-residue polypeptide: Accessory Sec system protein translocase subunit SecY2 (421 aa).

The next 10 membrane-spanning stretches (helical) occupy residues L17–V37, F69–I89, T102–I122, F139–L159, I165–T185, V204–V224, P254–L274, P299–I319, S358–I378, and T383–I403.

The protein belongs to the SecY/SEC61-alpha family. SecY2 subfamily. Component of the accessory SecA2/SecY2 protein translocase complex required to export cell wall proteins. May form heterotrimers with SecE and SecG subunits.

The protein localises to the cell membrane. In terms of biological role, part of the accessory SecA2/SecY2 system specifically required for export of possible cell wall proteins. The central subunit of a protein translocation channel. This chain is Accessory Sec system protein translocase subunit SecY2, found in Leuconostoc gelidum subsp. gasicomitatum (strain DSM 15947 / CCUG 46042 / CECT 5767 / JCM 12535 / LMG 18811 / NBRC 113245 / TB1-10) (Leuconostoc gasicomitatum).